A 452-amino-acid chain; its full sequence is UDP-N-acetylmuramoylalanine--D-glutamate ligase (452 aa).

119 to 125 (GSNGKTT) provides a ligand contact to ATP.

Belongs to the MurCDEF family.

It localises to the cytoplasm. The catalysed reaction is UDP-N-acetyl-alpha-D-muramoyl-L-alanine + D-glutamate + ATP = UDP-N-acetyl-alpha-D-muramoyl-L-alanyl-D-glutamate + ADP + phosphate + H(+). It functions in the pathway cell wall biogenesis; peptidoglycan biosynthesis. Its function is as follows. Cell wall formation. Catalyzes the addition of glutamate to the nucleotide precursor UDP-N-acetylmuramoyl-L-alanine (UMA). This chain is UDP-N-acetylmuramoylalanine--D-glutamate ligase, found in Streptococcus pyogenes serotype M5 (strain Manfredo).